Reading from the N-terminus, the 122-residue chain is UPF0145 protein BceJ2315_57450 (122 aa).

It belongs to the UPF0145 family.

This chain is UPF0145 protein BceJ2315_57450, found in Burkholderia cenocepacia (strain ATCC BAA-245 / DSM 16553 / LMG 16656 / NCTC 13227 / J2315 / CF5610) (Burkholderia cepacia (strain J2315)).